The primary structure comprises 172 residues: 3-hydroxydecanoyl-[acyl-carrier-protein] dehydratase (172 aa).

His71 is an active-site residue.

This sequence belongs to the thioester dehydratase family. FabA subfamily. Homodimer.

The protein resides in the cytoplasm. It carries out the reaction a (3R)-hydroxyacyl-[ACP] = a (2E)-enoyl-[ACP] + H2O. It catalyses the reaction (3R)-hydroxydecanoyl-[ACP] = (2E)-decenoyl-[ACP] + H2O. The enzyme catalyses (2E)-decenoyl-[ACP] = (3Z)-decenoyl-[ACP]. It functions in the pathway lipid metabolism; fatty acid biosynthesis. Necessary for the introduction of cis unsaturation into fatty acids. Catalyzes the dehydration of (3R)-3-hydroxydecanoyl-ACP to E-(2)-decenoyl-ACP and then its isomerization to Z-(3)-decenoyl-ACP. Can catalyze the dehydratase reaction for beta-hydroxyacyl-ACPs with saturated chain lengths up to 16:0, being most active on intermediate chain length. This Blochmanniella pennsylvanica (strain BPEN) protein is 3-hydroxydecanoyl-[acyl-carrier-protein] dehydratase.